Reading from the N-terminus, the 596-residue chain is Elongation factor 4 (596 aa).

The 183-residue stretch at 2–184 folds into the tr-type G domain; sequence DHIRNFSIIA…AVVARIPPPK (183 aa). GTP-binding positions include 14–19 and 131–134; these read DHGKST and NKID.

It belongs to the TRAFAC class translation factor GTPase superfamily. Classic translation factor GTPase family. LepA subfamily.

It localises to the cell inner membrane. The catalysed reaction is GTP + H2O = GDP + phosphate + H(+). In terms of biological role, required for accurate and efficient protein synthesis under certain stress conditions. May act as a fidelity factor of the translation reaction, by catalyzing a one-codon backward translocation of tRNAs on improperly translocated ribosomes. Back-translocation proceeds from a post-translocation (POST) complex to a pre-translocation (PRE) complex, thus giving elongation factor G a second chance to translocate the tRNAs correctly. Binds to ribosomes in a GTP-dependent manner. This chain is Elongation factor 4, found in Dechloromonas aromatica (strain RCB).